The chain runs to 245 residues: Ribonuclease PH (245 aa).

Phosphate is bound by residues Arg86 and 124–126 (GTR).

This sequence belongs to the RNase PH family. Homohexameric ring arranged as a trimer of dimers.

The catalysed reaction is tRNA(n+1) + phosphate = tRNA(n) + a ribonucleoside 5'-diphosphate. Phosphorolytic 3'-5' exoribonuclease that plays an important role in tRNA 3'-end maturation. Removes nucleotide residues following the 3'-CCA terminus of tRNAs; can also add nucleotides to the ends of RNA molecules by using nucleoside diphosphates as substrates, but this may not be physiologically important. Probably plays a role in initiation of 16S rRNA degradation (leading to ribosome degradation) during starvation. The polypeptide is Ribonuclease PH (Bacillus velezensis (strain DSM 23117 / BGSC 10A6 / LMG 26770 / FZB42) (Bacillus amyloliquefaciens subsp. plantarum)).